The following is a 354-amino-acid chain: Isopentenyl-diphosphate delta-isomerase (354 aa).

Residue 6–7 (RK) participates in substrate binding. Residues 63 to 65 (AMT), Ser93, and Asn122 contribute to the FMN site. Substrate is bound at residue 93-95 (SQR). Gln160 contributes to the substrate binding site. Glu161 contributes to the Mg(2+) binding site. FMN contacts are provided by residues Lys192, Thr221, 273–275 (GIR), and 294–295 (SQ).

The protein belongs to the IPP isomerase type 2 family. In terms of assembly, homooctamer. Dimer of tetramers. FMN serves as cofactor. Requires NADPH as cofactor. It depends on Mg(2+) as a cofactor.

The protein resides in the cytoplasm. It catalyses the reaction isopentenyl diphosphate = dimethylallyl diphosphate. Functionally, involved in the biosynthesis of isoprenoids. Catalyzes the 1,3-allylic rearrangement of the homoallylic substrate isopentenyl (IPP) to its allylic isomer, dimethylallyl diphosphate (DMAPP). This chain is Isopentenyl-diphosphate delta-isomerase, found in Pyrobaculum islandicum (strain DSM 4184 / JCM 9189 / GEO3).